The chain runs to 310 residues: Olfactory receptor 5P54 (310 aa).

Residues 1–25 (MNGGNHTSMTELFILGPTEDPTFCI) are Extracellular-facing. N5 carries an N-linked (GlcNAc...) asparagine glycan. The helical transmembrane segment at 26–46 (AFFVIFLGVYMVTLVGNISII) threads the bilayer. Topologically, residues 47-54 (TLIRISSQ) are cytoplasmic. A helical transmembrane segment spans residues 55 to 75 (LHTPVYLFLNHLAFVDILYST). At 76–99 (LVSVIMLMELLEHELALPVAACAA) the chain is on the extracellular side. C97 and C189 are disulfide-bonded. Residues 100–120 (ELCITVLFGSSECFLLAAMAY) traverse the membrane as a helical segment. The Cytoplasmic portion of the chain corresponds to 121 to 133 (DCYVAICSPLLYS). The helical transmembrane segment at 134-154 (TLMSSRVCFLLLGMSYVGGCM) threads the bilayer. Residues 155–196 (NGWIFTGCLLNLSFYGPYQIDHFFCDFSPLLKLSCSDVSIIG) lie on the Extracellular side of the membrane. N165 carries an N-linked (GlcNAc...) asparagine glycan. Residues 197 to 217 (IIPSISSGSIIVVTVLVIAVF) form a helical membrane-spanning segment. Over 218 to 237 (YICILMTILKMHSTDGCHKA) the chain is Cytoplasmic. Residues 238–258 (FSTCNSYLTAVTLYYGTITFI) traverse the membrane as a helical segment. At 259 to 271 (YVMPKSNYSTEKN) the chain is on the extracellular side. A glycan (N-linked (GlcNAc...) asparagine) is linked at N265. A helical transmembrane segment spans residues 272-292 (KVLSEFYTVVIPMLNHLIYSL). Over 293 to 310 (KNRDVKDALRKAIVRVYT) the chain is Cytoplasmic.

This sequence belongs to the G-protein coupled receptor 1 family.

It is found in the cell membrane. In terms of biological role, potential odorant receptor. The polypeptide is Olfactory receptor 5P54 (Mus musculus (Mouse)).